A 575-amino-acid polypeptide reads, in one-letter code: Arginine--tRNA ligase (575 aa).

The short motif at 130-140 (ANPTGPMHVGH) is the 'HIGH' region element.

It belongs to the class-I aminoacyl-tRNA synthetase family. In terms of assembly, monomer.

Its subcellular location is the cytoplasm. The enzyme catalyses tRNA(Arg) + L-arginine + ATP = L-arginyl-tRNA(Arg) + AMP + diphosphate. This chain is Arginine--tRNA ligase, found in Magnetococcus marinus (strain ATCC BAA-1437 / JCM 17883 / MC-1).